A 420-amino-acid polypeptide reads, in one-letter code: D-tagatose-1,6-bisphosphate aldolase subunit GatZ (420 aa).

The protein belongs to the GatZ/KbaZ family. GatZ subfamily. Forms a complex with GatY.

It functions in the pathway carbohydrate metabolism; D-tagatose 6-phosphate degradation; D-glyceraldehyde 3-phosphate and glycerone phosphate from D-tagatose 6-phosphate: step 2/2. Component of the tagatose-1,6-bisphosphate aldolase GatYZ that is required for full activity and stability of the Y subunit. Could have a chaperone-like function for the proper and stable folding of GatY. When expressed alone, GatZ does not show any aldolase activity. Is involved in the catabolism of galactitol. The sequence is that of D-tagatose-1,6-bisphosphate aldolase subunit GatZ from Escherichia coli (strain SMS-3-5 / SECEC).